The chain runs to 483 residues: MARAIMFQGTGSDVGKSVLVAGLCRVARNRGLKVRPFKPQNMSNNAAVSDDGGEIGRAQWLQALACGVPSSVHMNPVLLKPQTDMGSQLIVQGQVRGEARGRYYQELKPQLMAAVMESFAKVGDGADLVLVEGAGSPAEINLRAGDIANMGFAIHADVPVVLVGDIDRGGVIASLVGTHTILPQEDRAMVRGFLINKFRGDISLFDDGLAAITRFTGWRSFGVVPWLKAVSRLPAEDSVVLERAVRGDKKALIVAVPMLPRIANFDDLDPLKAEPAVEVVMVPPGSSLPADAGLVVLPGTKSTIADLLALRENGWDRELVAHVKRGGHVLGICGGFQMLGRRISDPAGIEGNVRDIEGLGLLDIETMMEPEKVVRNVEAVSLLHDEPLEGYEIHIGRTSGPDMARPFARIGDHDDGAVSPDGRIMGTYLHGVFSADRFRHHFLRALGVEGGQMNYRESVEEALDELAEGLEASLDIDGLFALA.

A GATase cobBQ-type domain is found at A251–F438. The active-site Nucleophile is the C333. Residue H430 is part of the active site.

The protein belongs to the CobB/CobQ family. CobQ subfamily.

Its pathway is cofactor biosynthesis; adenosylcobalamin biosynthesis. Catalyzes amidations at positions B, D, E, and G on adenosylcobyrinic A,C-diamide. NH(2) groups are provided by glutamine, and one molecule of ATP is hydrogenolyzed for each amidation. The sequence is that of Cobyric acid synthase from Brucella suis (strain ATCC 23445 / NCTC 10510).